The chain runs to 961 residues: Phosphofurin acidic cluster sorting protein 1 (961 aa).

Positions 1 to 19 (MAERGGAGGGPGGAGGGSS) are enriched in gly residues. 2 disordered regions span residues 1–70 (MAER…SSST) and 76–95 (VAVASGSAPPGGPGPGRTPA). A2 carries the post-translational modification N-acetylalanine. Residues 20 to 30 (QRGSGVAQSPQ) show a composition bias toward low complexity. S28 is modified (phosphoserine). The span at 31–46 (QQPPQQPSQPQQPTPP) shows a compositional bias: pro residues. At T44 the chain carries Phosphothreonine. Residues 51 to 70 (ATSSSSSTSAAAASSSSSST) show a composition bias toward low complexity. Y249 carries the post-translational modification Phosphotyrosine. Basic and acidic residues predominate over residues 260-271 (GIKSKLSDRSPD). Disordered regions lie at residues 260–297 (GIKSKLSDRSPDIDNYSEEEEESFSSEQEGSDDPLHGQ) and 375–426 (NPSD…GKDT). Acidic residues predominate over residues 274–291 (NYSEEEEESFSSEQEGSD). Residues 351–375 (HVSREQIREVEEDLDELYDSLEMYN) are a coiled coil. Phosphoserine is present on residues S377 and S379. The segment covering 404–426 (MSQSSSQTEIGSLNSKGSLGKDT) has biased composition (polar residues). S428 and S493 each carry phosphoserine. Disordered stretches follow at residues 475–540 (EKVK…HSTQ) and 758–802 (SPST…SMSS). The residue at position 502 (T502) is a Phosphothreonine. S517, S526, S527, S529, and S532 each carry phosphoserine. Residues 768-802 (SPVVSLTVPSTSPPSSSGLSRDATATPPSSPSMSS) show a composition bias toward low complexity.

Belongs to the PACS family. As to quaternary structure, associates with AP-1 and AP-3 but not with AP-2 complexes. Interacts with FURIN. Forms a ternary complex with furin and AP-1. Interacts with PKD2 (via acidic region). Interacts with SORL1. Interacts with WDR37.

It localises to the golgi apparatus. Its subcellular location is the trans-Golgi network. Its function is as follows. Coat protein that is involved in the localization of trans-Golgi network (TGN) membrane proteins that contain acidic cluster sorting motifs. Controls the endosome-to-Golgi trafficking of furin and mannose-6-phosphate receptor by connecting the acidic-cluster-containing cytoplasmic domain of these molecules with the adapter-protein complex-1 (AP-1) of endosomal clathrin-coated membrane pits. Required for normal ER Ca2+ handling in lymphocytes. Together with WDR37, it plays an essential role in lymphocyte development, quiescence and survival. Required for stabilizing peripheral lymphocyte populations. The chain is Phosphofurin acidic cluster sorting protein 1 (Pacs1) from Rattus norvegicus (Rat).